Reading from the N-terminus, the 452-residue chain is Ribosomal protein uS12 methylthiotransferase RimO (452 aa).

The MTTase N-terminal domain maps to 3–122; that stretch reads LTVGLISLGC…LPEIITQVMD (120 aa). The [4Fe-4S] cluster site is built by Cys-12, Cys-48, Cys-85, Cys-162, Cys-166, and Cys-169. A Radical SAM core domain is found at 148–392; it reads LTPPHTAYIK…TLLLARLASE (245 aa). One can recognise a TRAM domain in the interval 395–452; sequence QEQIGRQIRVLVDAPGVARTEWDAPDIDGTVSVPLTLPVGQFATVTVTDAVAYELTAE.

This sequence belongs to the methylthiotransferase family. RimO subfamily. [4Fe-4S] cluster serves as cofactor.

It is found in the cytoplasm. It catalyses the reaction L-aspartate(89)-[ribosomal protein uS12]-hydrogen + (sulfur carrier)-SH + AH2 + 2 S-adenosyl-L-methionine = 3-methylsulfanyl-L-aspartate(89)-[ribosomal protein uS12]-hydrogen + (sulfur carrier)-H + 5'-deoxyadenosine + L-methionine + A + S-adenosyl-L-homocysteine + 2 H(+). Functionally, catalyzes the methylthiolation of an aspartic acid residue of ribosomal protein uS12. The sequence is that of Ribosomal protein uS12 methylthiotransferase RimO from Akkermansia muciniphila (strain ATCC BAA-835 / DSM 22959 / JCM 33894 / BCRC 81048 / CCUG 64013 / CIP 107961 / Muc).